The chain runs to 69 residues: Alpha-conotoxin SrIA/SrIB (69 aa).

The signal sequence occupies residues 1 to 21 (MGMRMMFTVFLLVVLATTVVS). Residues 22–48 (FTSDSAFDSRNVAANDKVSDMIALTAR) constitute a propeptide that is removed on maturation. Disulfide bonds link C51–C57 and C52–C65. The segment at 53 to 55 (SRP) is ser-Xaa-Pro motif, crucial for potent interaction with nAChR. At P55 the chain carries 4-hydroxyproline; in form Sr1A and Sr1B. E60 carries the post-translational modification 4-carboxyglutamate; in form Sr1A. At E63 the chain carries 4-carboxyglutamate; in form Sr1A and Sr1B. Glycine amide; in form Sr1A and Sr1B is present on G66.

This sequence belongs to the conotoxin A superfamily. In terms of processing, occurs in 2 forms which differ in the post-translational modification of Glu-60. In form SrA1 Glu-60 is 4-carboxyglutamate while in form SrA2 Glu-60 is unmodified. In terms of tissue distribution, expressed by the venom duct.

The protein resides in the secreted. Its function is as follows. Alpha-conotoxins act on postsynaptic membranes, they bind to the nicotinic acetylcholine receptors (nAChR) and thus inhibit them. Has weak blocking effects on muscle nAChR composed of alpha-1/beta-1/gamma/delta subunits and the central nervous system nAChR composed of alpha-4/beta-2 subunits. Does not detectably affect the peripheral nervous system nAChR composed of alpha-3/beta-4 subunits. Low toxin concentrations potentiate currents in muscle nAChR composed of alpha-1/beta-1/gamma/delta subunits and central nervous system nAChR composed of alpha-4/beta-2 subunits, but not the peripheral nervous system nAChR composed of alpha-3/beta-4 subunits. This Conus spurius (Alphabet cone) protein is Alpha-conotoxin SrIA/SrIB.